Here is a 166-residue protein sequence, read N- to C-terminus: Regulator of ribonuclease activity A (166 aa).

This sequence belongs to the RraA family. As to quaternary structure, homotrimer. Binds to both RNA-binding sites in the C-terminal region of Rne and to RhlB.

It is found in the cytoplasm. Functionally, globally modulates RNA abundance by binding to RNase E (Rne) and regulating its endonucleolytic activity. Can modulate Rne action in a substrate-dependent manner by altering the composition of the degradosome. Modulates RNA-binding and helicase activities of the degradosome. This Glaesserella parasuis serovar 5 (strain SH0165) (Haemophilus parasuis) protein is Regulator of ribonuclease activity A.